The sequence spans 269 residues: Microtubule-associated protein RP/EB family member 1 (269 aa).

Residues 14–116 enclose the Calponin-homology (CH) domain; sequence NLSRHDMLAW…FVQWFKKFFD (103 aa). Residues 168–190 are disordered; that stretch reads RTAVSNKPPAQGISKKPATVGNG. The EB1 C-terminal domain maps to 186–256; the sequence is TVGNGDDESA…LYATDEGFVI (71 aa).

This sequence belongs to the MAPRE family.

The protein resides in the cytoplasm. The protein localises to the cytoskeleton. Its subcellular location is the microtubule organizing center. It localises to the centrosome. It is found in the golgi apparatus. The protein resides in the spindle. The protein localises to the spindle pole. Its function is as follows. Plus-end tracking protein (+TIP) that binds to the plus-end of microtubules and regulates the dynamics of the microtubule cytoskeleton. Promotes cytoplasmic microtubule nucleation and elongation. Involved in mitotic spindle positioning by stabilizing microtubules and promoting dynamic connection between astral microtubules and the cortex during mitotic chromosome segregation. This chain is Microtubule-associated protein RP/EB family member 1 (mapre1), found in Xenopus tropicalis (Western clawed frog).